Here is a 157-residue protein sequence, read N- to C-terminus: Glucosamine 6-phosphate N-acetyltransferase 1 (157 aa).

One can recognise an N-acetyltransferase domain in the interval 9 to 157 (ISFRPLDIDD…SIYLPTPPKL (149 aa)). Substrate is bound by residues T31, 78-81 (KFIR), and 90-92 (EDI). An acetyl-CoA-binding site is contributed by 100 to 105 (GKNLGL). 121–122 (YK) provides a ligand contact to substrate. Residue 135–137 (YEK) coordinates acetyl-CoA.

Belongs to the acetyltransferase family. GNA1 subfamily.

It catalyses the reaction D-glucosamine 6-phosphate + acetyl-CoA = N-acetyl-D-glucosamine 6-phosphate + CoA + H(+). It functions in the pathway nucleotide-sugar biosynthesis; UDP-N-acetyl-alpha-D-glucosamine biosynthesis; N-acetyl-alpha-D-glucosamine 1-phosphate from alpha-D-glucosamine 6-phosphate (route I): step 1/2. This is Glucosamine 6-phosphate N-acetyltransferase 1 (gna1) from Dictyostelium discoideum (Social amoeba).